The chain runs to 2513 residues: Highly reducing polyketide synthase ACRTS2 (2513 aa).

Residues aspartate 4–arginine 429 enclose the Ketosynthase family 3 (KS3) domain. Residues cysteine 174, histidine 313, and histidine 353 each act as for beta-ketoacyl synthase activity in the active site. The interval valine 547–threonine 875 is malonyl-CoA:ACP transacylase (MAT) domain. The active-site For malonyltransferase activity is the serine 635. An N-terminal hotdog fold region spans residues histidine 942 to leucine 1074. The interval histidine 942–aspartate 1253 is dehydratase (DH) domain. Residues histidine 942 to glutamine 1254 form the PKS/mFAS DH domain. Catalysis depends on histidine 974, which acts as the Proton acceptor; for dehydratase activity. Positions alanine 1092–glutamine 1254 are C-terminal hotdog fold. Aspartate 1161 functions as the Proton donor; for dehydratase activity in the catalytic mechanism. The segment at serine 1407–proline 1600 is methyltransferase (CMet) domain. Residues glycine 1816–valine 2127 form an enoylreductase (ER) domain region. The tract at residues alanine 2152 to valine 2327 is ketoreductase (KR) domain. The Carrier domain maps to aspartate 2433–arginine 2510. Serine 2470 is subject to O-(pantetheine 4'-phosphoryl)serine.

It participates in mycotoxin biosynthesis. Functionally, highly reducing polyketide synthase; part of the gene cluster that mediates the biosynthesis of the host-selective toxins (HSTs) ACR-toxins responsible for brown spot of rough lemon disease by the rough lemon pathotype. ACR-toxins cause uncoupling of mitochondrial oxidative-phosphorylation similar to that of classic protonophore. The structure of the major form of ACR-toxin (ACR-toxin I) consists of an alpha-dihydropyrone ring in a 19-carbon polyalcohol, a typical polyketide structure. Minor toxins were characterized as having a pyrone ring with polyalcohol side chains different in length and showing weaker toxicity. The highly reducing polyketide synthase ACRTS2 has all necessary enzymatic domains for multiple cycles of condensation and beta-keto processing. The cytochrome P450 monooxygenase ACRTS1 has also been shown to be essential for ACR-toxin biosynthesis, however its exact role in the pathway has not been elucidated yet. This chain is Highly reducing polyketide synthase ACRTS2, found in Alternaria alternata (Alternaria rot fungus).